A 429-amino-acid chain; its full sequence is Probable alcohol acetyltransferase orf1 (429 aa).

It belongs to the alcohol acetyltransferase FCK4 family.

Its pathway is secondary metabolite biosynthesis. Probable alcohol acetyltransferase; part of the gene cluster that mediates the biosynthesis of the glycolipid biosurfactant ustilagic acid (UA). UA is a secreted cellobiose glycolipid that is toxic for many microorganisms and confers biocontrol activity to U.maydis. UA consists of 15,16-dihydroxypalmitic or 2,15,16-trihydroxypalmitic acid, which is O-glycosidically linked to cellobiose at its terminal hydroxyl group. In addition, the cellobiose moiety is acetylated and acylated with a short-chain hydroxy fatty acid. UA biosynthesis starts with omega-hydroxylation of palmitic acid catalyzed by the cytochrome P450 monooxygenase cyp1. Terminal hydroxylation of palmitic acid precedes subterminal hydroxylation catalyzed by the cytochrome P450 monooxygenase cyp2. Sequential glucosylation of the hydroxy fatty acid is probably catalyzed by the glycosyltransferase ugt1. The cellobiose lipid is further decorated by acetylation of the proximal glucose residue and by acylation with a short-chain beta-hydroxy fatty acid at the distal glucose residue. The acyltransferase uat1 may be a good candidate for catalyzing either acetylation or acylation of the cellobiose lipid. The fatty acid synthase fas2 may be involved in synthesis of the carbon backbone of the short-chain beta-hydroxy fatty acid esterified to the cellobiose disaccharide. The secreted UA consists of a mixture of both alpha-hydroxylated and non-hydroxylated glycolipids; therefore, alpha-hydroxylation of the long-chain fatty, catalyzed by the fatty acid hydroxylase ahd1, occurs late in UA biosynthesis and may be the last step before secretion. This is Probable alcohol acetyltransferase orf1 from Mycosarcoma maydis (Corn smut fungus).